Reading from the N-terminus, the 426-residue chain is Glutamate-1-semialdehyde 2,1-aminomutase 2 (426 aa).

An N6-(pyridoxal phosphate)lysine modification is found at lysine 265.

This sequence belongs to the class-III pyridoxal-phosphate-dependent aminotransferase family. HemL subfamily. Homodimer. The cofactor is pyridoxal 5'-phosphate.

Its subcellular location is the cytoplasm. The enzyme catalyses (S)-4-amino-5-oxopentanoate = 5-aminolevulinate. Its pathway is porphyrin-containing compound metabolism; protoporphyrin-IX biosynthesis; 5-aminolevulinate from L-glutamyl-tRNA(Glu): step 2/2. In Lachnoclostridium phytofermentans (strain ATCC 700394 / DSM 18823 / ISDg) (Clostridium phytofermentans), this protein is Glutamate-1-semialdehyde 2,1-aminomutase 2.